A 66-amino-acid chain; its full sequence is Alpha-conotoxin GID (66 aa).

Residues 1 to 21 (MGMRMMFTVFLLVVLAATIVS) form the signal peptide. Residues 22-44 (FTSDRASDGRNVAAKAFHRIGRT) constitute a propeptide that is removed on maturation. Residues 45–48 (IRDE) form an N-terminal tail important for activity on alpha-3-beta-2/CHRNA3-CHRNB2 and alpha-4-beta-2/CHRNA4-CHRNB2 nAChR region. A 4-carboxyglutamate modification is found at Glu-48. Intrachain disulfides connect Cys-49-Cys-55 and Cys-50-Cys-63. A ser-Xaa-Pro motif, crucial for potent interaction with nAChR region spans residues 51-53 (SNP). Residue Pro-60 is modified to 4-hydroxyproline.

Belongs to the conotoxin A superfamily. In terms of processing, gamma-carboxyglutamation of Glu-48 seems to be not important for nAChR inhibition, since synthetic peptides without this modification do not show change in inhibition of alpha-7/CHRNA7 and alpha-3-beta-2/CHRNA3-CHRNB2 nAChR and show a 2.3-fold increase in inhibition of alpha-4-beta-2/CHRNA4-CHRNB2 nAChR. Post-translationally, hydroxylation of Pro-60 seems to be important for nAChR inhibition, since synthetic peptides without this modification show a small decrease in inhibition of alpha-7/CHRNA7 and alpha-3-beta-2/CHRNA3-CHRNB2 nAChR and a very important decrease in inhibition of alpha-4-beta-2/CHRNA4-CHRNB2 nAChR. An amidation of Cys-63 increases potency against alpha-7/CHRNA7 (2.6-fold) and alpha-3-beta-2/CHRNA3-CHRNB2 (2-fold) nAChR. On the other hand, the peptide has no more activity on alpha-4-beta-2/CHRNA4-CHRNB2 nAChR with an amidated Cys-63. Expressed by the venom duct.

The protein resides in the secreted. Its function is as follows. Alpha-conotoxins act on postsynaptic membranes, they bind to the nicotinic acetylcholine receptors (nAChR) and thus inhibit them. This toxin reversibly blocks alpha-3-beta-2/CHRNA3-CHRNB2 (IC(50)=3.1-5.1 nM), alpha-7/CHRNA7 (IC(50)=4.5-5.1 nM), and alpha-4-beta-2/CHRNA4-CHRNB2 (IC(50)=128.6-390 nM) nAChRs. The protein is Alpha-conotoxin GID of Conus geographus (Geography cone).